Reading from the N-terminus, the 391-residue chain is 3-ketoacyl-CoA thiolase (391 aa).

The Acyl-thioester intermediate role is filled by Cys95. Active-site proton acceptor residues include His347 and Cys377.

Belongs to the thiolase-like superfamily. Thiolase family. Heterotetramer of two alpha chains (FadB) and two beta chains (FadA).

It is found in the cytoplasm. The catalysed reaction is an acyl-CoA + acetyl-CoA = a 3-oxoacyl-CoA + CoA. The protein operates within lipid metabolism; fatty acid beta-oxidation. Its function is as follows. Catalyzes the final step of fatty acid oxidation in which acetyl-CoA is released and the CoA ester of a fatty acid two carbons shorter is formed. The chain is 3-ketoacyl-CoA thiolase from Pseudomonas fluorescens (strain Pf0-1).